A 327-amino-acid polypeptide reads, in one-letter code: Guanine nucleotide-binding protein subunit beta-like protein 1 (327 aa).

7 WD repeats span residues 16–54 (LRGT…IWSL), 58–97 (RAVT…LWDL), 103–145 (AVVD…ILEM), 153–195 (ALKP…LWDV), 200–237 (VCSR…VWSL), 242–282 (ALQV…VFHW), and 286–323 (QPLA…LWSL).

Ubiquitous. Highly expressed in heart, liver, skeletal muscle, kidney, spleen, thymus and pancreas. Detected at low levels in lung, placenta and brain.

It is found in the cytoplasm. It localises to the nucleus. Acts as a critical regulator of DNA damage response (DDR) signaling via specifically regulating phosphatidylinositol 3-kinase-related protein kinase (PIKK) family proteins. This Homo sapiens (Human) protein is Guanine nucleotide-binding protein subunit beta-like protein 1.